A 5400-amino-acid chain; its full sequence is Midasin (5400 aa).

AAA-ATPase protomer regions lie at residues 345–571 (MVSL…HGLP), 656–986 (LLEK…AIKA), 1050–1308 (SYVK…EKVV), 1347–1652 (SMRR…VNMA), 1769–2023 (VLRV…VLRI), and 2074–2347 (IRQN…MMGP). Residues 360-367 (GPSGSGKS), 674-681 (GETGTGKT), 1079-1086 (GPTSSGKT), 1369-1376 (GDTGGGKT), 1786-1793 (GSPGVGKT), and 2095-2102 (GPSSSGKT) each bind ATP. The tract at residues 2435 to 4569 (IYLSSLGVTD…DGVGAKDVSD (2135 aa)) is linker. Coiled coils occupy residues 2896-2916 (LERLKLEKKRLEDKMGFSEID), 3233-3253 (AMKITCKLLKLEEKISSLELN), and 3896-3916 (MEQLDLNRKNVETELKEVLKL). 3 disordered regions span residues 4540-4890 (EEDD…SSSN), 4905-4929 (TLTDNLPKMEFPQNQSSTAQQTKVN), and 4990-5069 (QVNT…RMDS). Basic and acidic residues predominate over residues 4576 to 4612 (QLHGTDKKEEEEKEQDDVLGKNKGIEMSDEFDGKEYS). The span at 4613–4631 (VSEDEEEDKEDEGSEDEPL) shows a compositional bias: acidic residues. Composition is skewed to basic and acidic residues over residues 4641 to 4652 (DAEKADEKPWNK) and 4661 to 4687 (MNEKNESGPSIVDKDTRSRELRAKDDG). 2 stretches are compositionally biased toward acidic residues: residues 4688 to 4698 (VETADEPEESN) and 4706 to 4721 (GNDENVEQDDFDDTDN). Over residues 4722–4732 (LEEKIQTKEEA) the composition is skewed to basic and acidic residues. The span at 4740-4750 (VDNEQIDDDME) shows a compositional bias: acidic residues. Basic and acidic residues predominate over residues 4751-4762 (MDKTEEVEKEDA). The span at 4779–4798 (GENDQEETQEPSEENMEAEA) shows a compositional bias: acidic residues. The span at 4799-4810 (EDRCGSPQKEEP) shows a compositional bias: basic and acidic residues. Residues 4811–4822 (GNDLEQEPETEP) show a composition bias toward acidic residues. A compositionally biased stretch (basic and acidic residues) spans 4823 to 4834 (IEGKEVMSEDMM). Polar residues-rich tracts occupy residues 4839–4855 (RNDNISGVESGSQNPHG), 4864–4874 (TAPQENLSATD), 4916–4928 (PQNQSSTAQQTKV), and 5030–5040 (SKPSISNSIAE). A Nuclear localization signal motif is present at residues 5157-5164 (MKKVIPYI). The region spanning 5186 to 5387 (QVVIAVDDSR…EALPRTLGDV (202 aa)) is the VWFA domain. A coiled-coil region spans residues 5271 to 5291 (VVNLLRNMNEMLENLASTRRQ).

Belongs to the midasin family. In terms of assembly, associates with pre-60S ribosomes in the nucleoplasm. As to expression, constitutively and ubiquitously expressed. Mostly observed in the shoot apex and root tip, and, to a lower extent, in mature seeds, seedling (excluding the hypocotyl), roots, stems, leaves and flowers.

It localises to the nucleus. It is found in the nucleolus. Its subcellular location is the nucleoplasm. Functionally, nuclear chaperone required for maturation and nuclear export of pre-60S ribosome subunits. Functions at successive maturation steps to remove ribosomal factors at critical transition points, first driving the exit of early pre-60S particles from the nucleolus and then driving late pre-60S particles from the nucleus. Required for female gametophyte development. Involved in the expression regulation of genes related to plant growth and development. This chain is Midasin, found in Arabidopsis thaliana (Mouse-ear cress).